We begin with the raw amino-acid sequence, 95 residues long: Co-chaperonin GroES (95 aa).

It belongs to the GroES chaperonin family. Heptamer of 7 subunits arranged in a ring. Interacts with the chaperonin GroEL.

Its subcellular location is the cytoplasm. Functionally, together with the chaperonin GroEL, plays an essential role in assisting protein folding. The GroEL-GroES system forms a nano-cage that allows encapsulation of the non-native substrate proteins and provides a physical environment optimized to promote and accelerate protein folding. GroES binds to the apical surface of the GroEL ring, thereby capping the opening of the GroEL channel. The chain is Co-chaperonin GroES from Aliivibrio salmonicida (strain LFI1238) (Vibrio salmonicida (strain LFI1238)).